Reading from the N-terminus, the 445-residue chain is Phosphoglucosamine mutase (445 aa).

The active-site Phosphoserine intermediate is Ser-99. Ser-99, Asp-242, Asp-244, and Asp-246 together coordinate Mg(2+). Ser-99 bears the Phosphoserine mark.

Belongs to the phosphohexose mutase family. Requires Mg(2+) as cofactor. In terms of processing, activated by phosphorylation.

The enzyme catalyses alpha-D-glucosamine 1-phosphate = D-glucosamine 6-phosphate. Its function is as follows. Catalyzes the conversion of glucosamine-6-phosphate to glucosamine-1-phosphate. This Campylobacter jejuni (strain RM1221) protein is Phosphoglucosamine mutase.